The sequence spans 254 residues: Glycerol operon regulatory protein (254 aa).

Positions 5 to 67 constitute an HTH iclR-type domain; it reads IQSLERAAAM…PASGRYQLGA (63 aa). The H-T-H motif DNA-binding region spans 27–46; it reads LSDIASTLGLAKGTAHGILR. An IclR-ED domain is found at 82–251; the sequence is LRARALVWTD…AAAVSRDLGA (170 aa).

May be an activator protein for the gylABX operon. The polypeptide is Glycerol operon regulatory protein (gylR) (Streptomyces griseus).